A 475-amino-acid chain; its full sequence is Sensor histidine kinase QseE (475 aa).

Residues Met1–Gln13 are Cytoplasmic-facing. A helical membrane pass occupies residues Leu14–Trp34. Residues Gln35–Gln173 lie on the Periplasmic side of the membrane. A helical membrane pass occupies residues Tyr174–Thr194. At Arg195–Lys475 the chain is on the cytoplasmic side. Residues His256–Lys472 enclose the Histidine kinase domain. His259 is subject to Phosphohistidine; by autocatalysis.

Post-translationally, autophosphorylated.

The protein resides in the cell inner membrane. It catalyses the reaction ATP + protein L-histidine = ADP + protein N-phospho-L-histidine.. Functionally, member of the two-component regulatory system QseF/QseE involved in the regulation of virulence and metabolism in EHEC. Required for pedestal formation in host epithelial cells during infection. Autophosphorylates in response to epinephrine, sulfate or phosphate and then probably transfers its phosphate group to QseF. This chain is Sensor histidine kinase QseE (qseE), found in Escherichia coli O157:H7.